The sequence spans 286 residues: 3-hydroxybutyryl-CoA dehydrogenase (286 aa).

This sequence belongs to the 3-hydroxyacyl-CoA dehydrogenase family.

The catalysed reaction is 3-hydroxybutanoyl-CoA + NAD(+) = acetoacetyl-CoA + NADH + H(+). It catalyses the reaction (3S)-3-hydroxybutanoyl-CoA + NADP(+) = acetoacetyl-CoA + NADPH + H(+). It functions in the pathway lipid metabolism; butanoate metabolism. This chain is 3-hydroxybutyryl-CoA dehydrogenase (fadB2), found in Mycobacterium tuberculosis (strain CDC 1551 / Oshkosh).